The primary structure comprises 248 residues: MAGHSQFKNIMHRKGKQDAQRSKAFSKLAREITVAAKLGTPDPAMNPRLRAAVIAARAENMPKDNIERAIKKAIGGDSENYDEIRYEGYGPGGVAVIVEALTDNRNRAASDIRSFFTKSGGNLGETGSVSFMFDRTGVIEYDADKASADDMLEAAIEAGADDVASSESGHEVYASQDTFRDVAKALEAKFGEARKAALIWKPQNTVAVDDETGEKLFKLMDHLNDHDDVQNVYANFEVSDALMAKMAG.

Residues Met-1–Ser-22 are disordered.

The protein belongs to the TACO1 family.

It is found in the cytoplasm. This is Probable transcriptional regulatory protein RPB_4273 from Rhodopseudomonas palustris (strain HaA2).